A 186-amino-acid chain; its full sequence is Transposon Tn21 resolvase (186 aa).

Residues 4 to 137 form the Resolvase/invertase-type recombinase catalytic domain; that stretch reads QRIGYIRVST…EGIALAKQRG (134 aa). Ser12 functions as the O-(5'-phospho-DNA)-serine intermediate in the catalytic mechanism. The segment at residues 164 to 183 is a DNA-binding region (H-T-H motif); it reads KTKLAREFGISRETLYQYLR.

Belongs to the site-specific recombinase resolvase family.

Resolvase catalyzes the resolution (a site-specific recombination) of the cointegrated replicon to yield the final transposition products. The chain is Transposon Tn21 resolvase (tnpR) from Escherichia coli.